A 149-amino-acid polypeptide reads, in one-letter code: Arginine repressor (149 aa).

It belongs to the ArgR family.

It localises to the cytoplasm. Its pathway is amino-acid biosynthesis; L-arginine biosynthesis [regulation]. Functionally, regulates arginine biosynthesis genes. In Shouchella clausii (strain KSM-K16) (Alkalihalobacillus clausii), this protein is Arginine repressor.